The following is a 399-amino-acid chain: Methylthioribose kinase (399 aa).

ATP contacts are provided by residues Asn40, Lys57, and 111–113 (EDL). Asp229 is a substrate binding site. 246–248 (DAE) is a binding site for ATP. Arg344 serves as a coordination point for substrate.

Belongs to the methylthioribose kinase family. In terms of assembly, homodimer.

The catalysed reaction is 5-(methylsulfanyl)-D-ribose + ATP = 5-(methylsulfanyl)-alpha-D-ribose 1-phosphate + ADP + H(+). It participates in amino-acid biosynthesis; L-methionine biosynthesis via salvage pathway; S-methyl-5-thio-alpha-D-ribose 1-phosphate from S-methyl-5'-thioadenosine (hydrolase route): step 2/2. In terms of biological role, catalyzes the phosphorylation of methylthioribose into methylthioribose-1-phosphate. In Enterobacter sp. (strain 638), this protein is Methylthioribose kinase.